The primary structure comprises 514 residues: Vacuolar aminopeptidase 1 (514 aa).

A propeptide spans 1–45 (MEEQREILEQLKKTLQMLTVEPSKNNQIANEEKEKKENENSWCIL) (required for vacuolar localization. Mediates aggregation and vesicle formation in Cvt pathway). 2 N-linked (GlcNAc...) asparagine glycosylation sites follow: Asn-107 and Asn-110. His-132 is a binding site for Zn(2+). His-210 serves as a coordination point for substrate. Zn(2+) contacts are provided by Asp-303, Glu-339, and Glu-340. Position 339 (Glu-339) interacts with substrate. Ser-356 is modified (phosphoserine). Residue Asp-385 participates in Zn(2+) binding. Positions 385 and 388 each coordinate substrate. Asn-448 carries an N-linked (GlcNAc...) asparagine glycan. Position 479 (His-479) interacts with Zn(2+).

Belongs to the peptidase M18 family. Homododecamer. The precursor form of aminopeptidase 1 (prApe1) assembles into dodecamers and further aggregates into higher multimers (the Ape1 complex) in the cytoplasm. The Ape1 complex is disaggregated in the vacuolar lumen, but mature aminopeptidase 1 (mApe1) retains its dodecameric form. Dodecamer assembly in the cytoplasm is essential for formation of an enzymatically active complex. If cytoplasmic homododecamerization of prApe1 is disturbed in mutants, homododecamers of mApe1 will form in the vacuole, but they are enzymatically inactive. Interacts with ATG19. It depends on Zn(2+) as a cofactor. Synthesized in a precursor form (prApe1) that has an amino-terminal propeptide. The N-terminal extension of the 61 kDa precursor is proteolytically processed in two sequential steps. The first step involves proteinase A (PrA/PEP4) and produces a 55 kDa unstable intermediate (iAPI). The second step involves proteinase B (PrB/PRB1) and converts iAPI into the 50 kDa stable, mature enzyme (mApe1).

The protein localises to the vacuole. The catalysed reaction is Release of an N-terminal amino acid, preferably a neutral or hydrophobic one, from a polypeptide. Aminoacyl-arylamides are poor substrates.. Strongly and specifically activated by Cl(-) and Br(-), which act as positive allosteric effectors. Inactivated by metal-chelating agents. Resident vacuolar enzyme that catalyzes the removal of amino acids from the N-terminus of peptides and proteins. Also acts as the major cargo protein of the cytoplasm-to-vacuole targeting (Cvt) pathway. The precursor form of aminopeptidase 1 (prApe1) assembles into dodecamers and the propeptide mediates the aggregation of dodecamers into higher multimers. The multimers are then recognized via the propeptide by their receptor ATG19, and ATG19 further interacts with ATG11, which tethers the APE1-ATG19 complex to the pre-autophagosomal structure (PAS). The cargo-receptor complex (also Cvt complex) is selectively enwrapped by a double-membrane structure termed the Cvt vesicle under vegetative growth conditions and by a similar but larger double-membrane structure termed the autophagosome under nitrogen starvation conditions. The Cvt vesicle or the autophagosome fuses with the vacuolar membrane and release its content in the vacuolar lumen. In the vacuole, prApe1 is processed into mature aminopeptidase 1 (mApe1). This chain is Vacuolar aminopeptidase 1, found in Saccharomyces cerevisiae (strain ATCC 204508 / S288c) (Baker's yeast).